The following is a 428-amino-acid chain: Glutamate-1-semialdehyde 2,1-aminomutase (428 aa).

The residue at position 265 (lysine 265) is an N6-(pyridoxal phosphate)lysine.

The protein belongs to the class-III pyridoxal-phosphate-dependent aminotransferase family. HemL subfamily. In terms of assembly, homodimer. The cofactor is pyridoxal 5'-phosphate.

The protein resides in the cytoplasm. The enzyme catalyses (S)-4-amino-5-oxopentanoate = 5-aminolevulinate. It participates in porphyrin-containing compound metabolism; protoporphyrin-IX biosynthesis; 5-aminolevulinate from L-glutamyl-tRNA(Glu): step 2/2. This Ruthia magnifica subsp. Calyptogena magnifica protein is Glutamate-1-semialdehyde 2,1-aminomutase.